The following is a 393-amino-acid chain: MQSHKILVVNAGSSSIKFQLFNDKKQVLAKGLCERIFIDGFFKLEFNQKKIEEKVQFNDHNLAVKHFLNALKKNKIITELSEIGLIGHRVVQGANYFTDAVLVDTHSLAKIKEFIKLAPLHNKPEADVIEIFLKEIKTAKNVAVFDTTFHTTIPRENYLYAVPENWEKNNLVRRYGFHGTSYKYINEFLEKKFNKKPLNLIVCHLGNGASVCAIKQGKSLNTSMGFTPLEGLIMGTRSGDIDPAIVSYIAEQQKLSCNDVVNELNKKSGMFAITGSSDMRDIFDKPEINDIAIKMYVNRVADYIAKYLNQLSGEIDSLVFTGGVGENASYCVQLIIEKVASLGFKTNSNLFGNYQDSSLISTNESKYQIFRVRTNEELMIVEDALRVSTNIKK.

N10 contacts Mg(2+). Position 17 (K17) interacts with ATP. R89 contributes to the substrate binding site. D146 acts as the Proton donor/acceptor in catalysis. Residues 204–208 (HLGNG), 278–280 (DMR), and 323–327 (GVGEN) contribute to the ATP site. Mg(2+) is bound at residue E376.

It belongs to the acetokinase family. As to quaternary structure, homodimer. The cofactor is Mg(2+). Mn(2+) serves as cofactor.

It is found in the cytoplasm. The enzyme catalyses acetate + ATP = acetyl phosphate + ADP. It participates in metabolic intermediate biosynthesis; acetyl-CoA biosynthesis; acetyl-CoA from acetate: step 1/2. Catalyzes the formation of acetyl phosphate from acetate and ATP. Can also catalyze the reverse reaction. The chain is Acetate kinase from Mycoplasma genitalium (strain ATCC 33530 / DSM 19775 / NCTC 10195 / G37) (Mycoplasmoides genitalium).